Reading from the N-terminus, the 269-residue chain is Hydroxyethylthiazole kinase (269 aa).

Residue M45 coordinates substrate. Residues R121 and T167 each contribute to the ATP site. Residue G194 coordinates substrate.

It belongs to the Thz kinase family. Requires Mg(2+) as cofactor.

The catalysed reaction is 5-(2-hydroxyethyl)-4-methylthiazole + ATP = 4-methyl-5-(2-phosphooxyethyl)-thiazole + ADP + H(+). It participates in cofactor biosynthesis; thiamine diphosphate biosynthesis; 4-methyl-5-(2-phosphoethyl)-thiazole from 5-(2-hydroxyethyl)-4-methylthiazole: step 1/1. Its function is as follows. Catalyzes the phosphorylation of the hydroxyl group of 4-methyl-5-beta-hydroxyethylthiazole (THZ). The protein is Hydroxyethylthiazole kinase of Bacillus cytotoxicus (strain DSM 22905 / CIP 110041 / 391-98 / NVH 391-98).